Reading from the N-terminus, the 210-residue chain is Imidazole glycerol phosphate synthase subunit HisH (210 aa).

In terms of domain architecture, Glutamine amidotransferase type-1 spans 3-208; it reads PIAIIDYGMG…GELVRHAGNA (206 aa). Cys81 acts as the Nucleophile in catalysis. Active-site residues include His183 and Glu185.

As to quaternary structure, heterodimer of HisH and HisF.

It localises to the cytoplasm. It catalyses the reaction 5-[(5-phospho-1-deoxy-D-ribulos-1-ylimino)methylamino]-1-(5-phospho-beta-D-ribosyl)imidazole-4-carboxamide + L-glutamine = D-erythro-1-(imidazol-4-yl)glycerol 3-phosphate + 5-amino-1-(5-phospho-beta-D-ribosyl)imidazole-4-carboxamide + L-glutamate + H(+). The enzyme catalyses L-glutamine + H2O = L-glutamate + NH4(+). It participates in amino-acid biosynthesis; L-histidine biosynthesis; L-histidine from 5-phospho-alpha-D-ribose 1-diphosphate: step 5/9. Functionally, IGPS catalyzes the conversion of PRFAR and glutamine to IGP, AICAR and glutamate. The HisH subunit catalyzes the hydrolysis of glutamine to glutamate and ammonia as part of the synthesis of IGP and AICAR. The resulting ammonia molecule is channeled to the active site of HisF. This Moorella thermoacetica (strain ATCC 39073 / JCM 9320) protein is Imidazole glycerol phosphate synthase subunit HisH.